The following is a 309-amino-acid chain: Homoserine kinase (309 aa).

91 to 101 (PIGSGLGSSAC) provides a ligand contact to ATP.

This sequence belongs to the GHMP kinase family. Homoserine kinase subfamily.

The protein resides in the cytoplasm. It catalyses the reaction L-homoserine + ATP = O-phospho-L-homoserine + ADP + H(+). It participates in amino-acid biosynthesis; L-threonine biosynthesis; L-threonine from L-aspartate: step 4/5. Catalyzes the ATP-dependent phosphorylation of L-homoserine to L-homoserine phosphate. The polypeptide is Homoserine kinase (Salmonella arizonae (strain ATCC BAA-731 / CDC346-86 / RSK2980)).